We begin with the raw amino-acid sequence, 245 residues long: Orotidine 5'-phosphate decarboxylase (245 aa).

Residues Asp-22, Lys-44, 71-80, Thr-131, Arg-192, Gln-201, Gly-221, and Arg-222 contribute to the substrate site; that span reads DLKFHDIPNT. Residue Lys-73 is the Proton donor of the active site.

The protein belongs to the OMP decarboxylase family. Type 1 subfamily. As to quaternary structure, homodimer.

The catalysed reaction is orotidine 5'-phosphate + H(+) = UMP + CO2. It functions in the pathway pyrimidine metabolism; UMP biosynthesis via de novo pathway; UMP from orotate: step 2/2. Functionally, catalyzes the decarboxylation of orotidine 5'-monophosphate (OMP) to uridine 5'-monophosphate (UMP). The chain is Orotidine 5'-phosphate decarboxylase from Escherichia coli O139:H28 (strain E24377A / ETEC).